A 320-amino-acid chain; its full sequence is MEAFLLENRKPQITTLASGKTLKPATHRLNLPAYTKLIHELRTKTHAKVAISLSTDSQIHMVWVKSGLVFFTPSASHPAYVNFASSNRLTDVPALTKTTFPQSDVKLIETTPLPNDETSHVASFQLVTWMEGALNILNDLSKCAISFINQCEDTFKSGTNLNKELYNRCITAESRDFCNQMKFVLIGRLCYGQTTSPPPIQLYQYGVTPFISSDIICEGAAYRPIDVENYAMNSNHTVSYAPFFVPNETKPGSRIDLIMVNHLKKFNLMFDSWYKTGGSVMVSSRPERTQNEASVSQIMPTSVKHIANEDLTADDGEGSE.

This is Non-structural protein 5 (S9) from Lymantria dispar (Gypsy moth).